Reading from the N-terminus, the 158-residue chain is NADH-quinone oxidoreductase subunit B (158 aa).

[4Fe-4S] cluster is bound by residues Cys37, Cys38, Cys102, and Cys132.

It belongs to the complex I 20 kDa subunit family. As to quaternary structure, NDH-1 is composed of 14 different subunits. Subunits NuoB, C, D, E, F, and G constitute the peripheral sector of the complex. It depends on [4Fe-4S] cluster as a cofactor.

It is found in the cell inner membrane. It carries out the reaction a quinone + NADH + 5 H(+)(in) = a quinol + NAD(+) + 4 H(+)(out). Its function is as follows. NDH-1 shuttles electrons from NADH, via FMN and iron-sulfur (Fe-S) centers, to quinones in the respiratory chain. Couples the redox reaction to proton translocation (for every two electrons transferred, four hydrogen ions are translocated across the cytoplasmic membrane), and thus conserves the redox energy in a proton gradient. The sequence is that of NADH-quinone oxidoreductase subunit B from Nitrosomonas europaea (strain ATCC 19718 / CIP 103999 / KCTC 2705 / NBRC 14298).